The following is a 262-amino-acid chain: Triosephosphate isomerase (262 aa).

N13 to K15 contributes to the substrate binding site. The active-site Electrophile is H103. E175 acts as the Proton acceptor in catalysis. Substrate is bound by residues G181, S221, and G242–G243.

This sequence belongs to the triosephosphate isomerase family. As to quaternary structure, homodimer.

It is found in the cytoplasm. The catalysed reaction is D-glyceraldehyde 3-phosphate = dihydroxyacetone phosphate. It functions in the pathway carbohydrate biosynthesis; gluconeogenesis. The protein operates within carbohydrate degradation; glycolysis; D-glyceraldehyde 3-phosphate from glycerone phosphate: step 1/1. Its function is as follows. Involved in the gluconeogenesis. Catalyzes stereospecifically the conversion of dihydroxyacetone phosphate (DHAP) to D-glyceraldehyde-3-phosphate (G3P). This chain is Triosephosphate isomerase, found in Corynebacterium efficiens (strain DSM 44549 / YS-314 / AJ 12310 / JCM 11189 / NBRC 100395).